We begin with the raw amino-acid sequence, 700 residues long: Peroxisomal acyl-coenzyme A oxidase 1 (700 aa).

Residues threonine 147, glycine 186, and cysteine 412–tyrosine 417 each bind FAD. The active-site Proton acceptor is the glutamate 437. The short motif at serine 698–leucine 700 is the Microbody targeting signal element.

The protein belongs to the acyl-CoA oxidase family. It depends on FAD as a cofactor.

The protein localises to the peroxisome. It carries out the reaction a 2,3-saturated acyl-CoA + O2 = a (2E)-enoyl-CoA + H2O2. Functionally, catalyzes the desaturation of acyl-CoAs to 2-trans-enoyl-CoAs. First enzyme of the fatty acid beta-oxidation pathway. The polypeptide is Peroxisomal acyl-coenzyme A oxidase 1 (acox1) (Dictyostelium discoideum (Social amoeba)).